The following is a 240-amino-acid chain: Sugar fermentation stimulation protein homolog (240 aa).

This sequence belongs to the SfsA family.

This chain is Sugar fermentation stimulation protein homolog, found in Saccharolobus islandicus (strain M.14.25 / Kamchatka #1) (Sulfolobus islandicus).